Consider the following 438-residue polypeptide: Trigger factor (438 aa).

In terms of domain architecture, PPIase FKBP-type spans 162–247 (GDIVTIDFEG…VKEIKVKELP (86 aa)).

Belongs to the FKBP-type PPIase family. Tig subfamily.

The protein resides in the cytoplasm. The enzyme catalyses [protein]-peptidylproline (omega=180) = [protein]-peptidylproline (omega=0). In terms of biological role, involved in protein export. Acts as a chaperone by maintaining the newly synthesized protein in an open conformation. Functions as a peptidyl-prolyl cis-trans isomerase. This Caldicellulosiruptor saccharolyticus (strain ATCC 43494 / DSM 8903 / Tp8T 6331) protein is Trigger factor.